Consider the following 366-residue polypeptide: Chorismate synthase (366 aa).

NADP(+) is bound by residues arginine 48 and arginine 54. Residues 125–127 (RSS), 238–239 (NA), glycine 278, 293–297 (KPTSS), and arginine 319 contribute to the FMN site.

This sequence belongs to the chorismate synthase family. As to quaternary structure, homotetramer. Requires FMNH2 as cofactor.

The enzyme catalyses 5-O-(1-carboxyvinyl)-3-phosphoshikimate = chorismate + phosphate. It participates in metabolic intermediate biosynthesis; chorismate biosynthesis; chorismate from D-erythrose 4-phosphate and phosphoenolpyruvate: step 7/7. Its function is as follows. Catalyzes the anti-1,4-elimination of the C-3 phosphate and the C-6 proR hydrogen from 5-enolpyruvylshikimate-3-phosphate (EPSP) to yield chorismate, which is the branch point compound that serves as the starting substrate for the three terminal pathways of aromatic amino acid biosynthesis. This reaction introduces a second double bond into the aromatic ring system. In Ralstonia pickettii (strain 12J), this protein is Chorismate synthase.